Here is a 462-residue protein sequence, read N- to C-terminus: MFENLSDRLSKTLRNITGKGRLTEDNIKETLREVRMALLEADVALPVVREFIAKVKESALGEEVNKSLTPGQEFLKIVQRELEKAMGEANESLNLATQPPAVILMAGLQGAGKTTSVGKLAKFLRERHKKKVLVVSADVYRPAAIKQLETLAQSVGVDFFPSDVKQNPVDIAKSALADAKLKFYDVLIVDTAGRLHVDTEMMDEIKQVHAALNPIETLFTVDAMTGQDAANTAKAFNEALPLTGVILTKVDGDARGGAALSIRQITGKPIKFLGVGEKTEALEPFHPDRVASRILGMGDVLSLIEDLERSVDREKAEKMAQKFKKGDDFTLDDFREQLIEMKKMGGMMSMLEKLPGAKNLSEHVKNQVDDKMFVKMEAIINSMTLKERANPDIIKGSRRRRIALGSGTQVQDVNKLLKQFDEMQRMMKKMRKGGMAKMMRGMQGLMGGGLGGLGGLGGMFKR.

GTP contacts are provided by residues 107-114, 190-194, and 248-251; these read GLQGAGKT, DTAGR, and TKVD.

This sequence belongs to the GTP-binding SRP family. SRP54 subfamily. In terms of assembly, part of the signal recognition particle protein translocation system, which is composed of SRP and FtsY. SRP is a ribonucleoprotein composed of Ffh and a 4.5S RNA molecule.

The protein resides in the cytoplasm. It catalyses the reaction GTP + H2O = GDP + phosphate + H(+). Functionally, involved in targeting and insertion of nascent membrane proteins into the cytoplasmic membrane. Binds to the hydrophobic signal sequence of the ribosome-nascent chain (RNC) as it emerges from the ribosomes. The SRP-RNC complex is then targeted to the cytoplasmic membrane where it interacts with the SRP receptor FtsY. Interaction with FtsY leads to the transfer of the RNC complex to the Sec translocase for insertion into the membrane, the hydrolysis of GTP by both Ffh and FtsY, and the dissociation of the SRP-FtsY complex into the individual components. The sequence is that of Signal recognition particle protein from Haemophilus influenzae (strain ATCC 51907 / DSM 11121 / KW20 / Rd).